The primary structure comprises 238 residues: MNEQQFIEALKKKGIELSEKQITQFKKYFELLVEWNEKMNLTAITDLEGVYLKHFFDSISASFYFDFSKVITVCDVGAGAGFPSIPIKICFPHLHVTIVDSLNKRITFLNHLSDELQLENMNFVHARAEEFGQNIKYREQYDVVTARAVARLSVLSELCVPLAKQGGYFVALKAAAGAEELKDAKKALTTLGVKLKEEYSFKLPVEESDRILYIFDKIKGTPKKYPRKPGVPNKTPIQ.

Residues Gly77, Phe82, 128–129, and Arg147 each bind S-adenosyl-L-methionine; that span reads AE.

Belongs to the methyltransferase superfamily. RNA methyltransferase RsmG family.

Its subcellular location is the cytoplasm. Functionally, specifically methylates the N7 position of guanine in position 535 of 16S rRNA. The sequence is that of Ribosomal RNA small subunit methyltransferase G from Lysinibacillus sphaericus (strain C3-41).